A 204-amino-acid chain; its full sequence is MTPPGRLYLRRVCSTPILLLLGLLLALPPEAQGLPGVGLPPSAAQPAHQHPPKHLARGTLKPAAHLVGDPSTPDSLRWRANTDRAFLRHGFLLSNNSLLVPTSGLYFVYSQVVFSGEGCFPKATPTPLYLAHEVQLFSSQYPFHVPLLSAQKSVCPGPQGPWVRSVYQGAVFLLTQGDQLSTHTDGTPHLLLSPSSVFFGAFAL.

The signal sequence occupies residues 1–33 (MTPPGRLYLRRVCSTPILLLLGLLLALPPEAQG). Residues 62 to 204 (PAAHLVGDPS…SSVFFGAFAL (143 aa)) form the THD domain. An N-linked (GlcNAc...) asparagine glycan is attached at N95. C119 and C155 are disulfide-bonded.

This sequence belongs to the tumor necrosis factor family. Homotrimer, and heterotrimer of either two LTB and one LTA subunits or (less prevalent) two LTA and one LTB subunits. Interacts with TNFRSF14.

It is found in the secreted. It localises to the membrane. Cytokine that in its homotrimeric form binds to TNFRSF1A/TNFR1, TNFRSF1B/TNFBR and TNFRSF14/HVEM. In its heterotrimeric form with LTB binds to TNFRSF3/LTBR. Lymphotoxin is produced by lymphocytes and is cytotoxic for a wide range of tumor cells in vitro and in vivo. This chain is Lymphotoxin-alpha (LTA), found in Sus scrofa (Pig).